Consider the following 353-residue polypeptide: MSTIVTVPRSVSWKGDAIAVLNQTKLPHSTEYKTLTTIEEVWKSIIMLEVRGAPAIGIVAAFGLALAAKKYNTLHIEEFQKKFNRDCNYLGTSRPTAVNLFWAIDRMRESIREITTIKEAQKILEEEALRIQQEDEEVCRNIGEYALTCFKDGDNILTICNAGSIATARYGTALAPFYIGKEKGVRLHAYACETRPVLQGGRLTTWELKQANIDVTLITDNTAAHAIQTKEINAIIVGADRIVANGDTANKIGTMNLAILAKYFNIPFYVAAPLSTFDVTKETGAEIIIEERDETEVTKIFGKQVAPIGTDVYNPAFDITPNELITGIITEKGIIRGDYKREIASLFEKQANT.

Substrate contacts are provided by residues 51–53 (RGA), arginine 94, and glutamine 199. The active-site Proton donor is aspartate 240. 250–251 (NK) contacts substrate.

This sequence belongs to the EIF-2B alpha/beta/delta subunits family. MtnA subfamily. In terms of assembly, homodimer.

The catalysed reaction is 5-(methylsulfanyl)-alpha-D-ribose 1-phosphate = 5-(methylsulfanyl)-D-ribulose 1-phosphate. It functions in the pathway amino-acid biosynthesis; L-methionine biosynthesis via salvage pathway; L-methionine from S-methyl-5-thio-alpha-D-ribose 1-phosphate: step 1/6. In terms of biological role, catalyzes the interconversion of methylthioribose-1-phosphate (MTR-1-P) into methylthioribulose-1-phosphate (MTRu-1-P). In Bacillus cereus (strain ATCC 14579 / DSM 31 / CCUG 7414 / JCM 2152 / NBRC 15305 / NCIMB 9373 / NCTC 2599 / NRRL B-3711), this protein is Methylthioribose-1-phosphate isomerase.